The primary structure comprises 92 residues: Small ribosomal subunit protein uS19c (92 aa).

This sequence belongs to the universal ribosomal protein uS19 family.

The protein resides in the plastid. The protein localises to the chloroplast. Protein S19 forms a complex with S13 that binds strongly to the 16S ribosomal RNA. In Platanus occidentalis (Sycamore), this protein is Small ribosomal subunit protein uS19c.